We begin with the raw amino-acid sequence, 133 residues long: Ribonuclease P protein component (133 aa).

It belongs to the RnpA family. In terms of assembly, consists of a catalytic RNA component (M1 or rnpB) and a protein subunit.

It carries out the reaction Endonucleolytic cleavage of RNA, removing 5'-extranucleotides from tRNA precursor.. Its function is as follows. RNaseP catalyzes the removal of the 5'-leader sequence from pre-tRNA to produce the mature 5'-terminus. It can also cleave other RNA substrates such as 4.5S RNA. The protein component plays an auxiliary but essential role in vivo by binding to the 5'-leader sequence and broadening the substrate specificity of the ribozyme. The sequence is that of Ribonuclease P protein component from Pseudomonas fluorescens (strain Pf0-1).